Reading from the N-terminus, the 394-residue chain is Elongation factor Tu 1 (394 aa).

Residues 10-204 form the tr-type G domain; that stretch reads KPHVNVGTIG…ALDSYIPEPE (195 aa). The G1 stretch occupies residues 19 to 26; that stretch reads GHVDHGKT. 19–26 contributes to the GTP binding site; sequence GHVDHGKT. Mg(2+) is bound at residue threonine 26. A G2 region spans residues 60-64; the sequence is GITIS. The segment at 81 to 84 is G3; that stretch reads DCPG. Residues 81–85 and 136–139 contribute to the GTP site; these read DCPGH and NKCD. Residues 136–139 form a G4 region; the sequence is NKCD. Residues 174 to 176 form a G5 region; the sequence is SAL.

The protein belongs to the TRAFAC class translation factor GTPase superfamily. Classic translation factor GTPase family. EF-Tu/EF-1A subfamily. Monomer.

It localises to the cytoplasm. It catalyses the reaction GTP + H2O = GDP + phosphate + H(+). In terms of biological role, GTP hydrolase that promotes the GTP-dependent binding of aminoacyl-tRNA to the A-site of ribosomes during protein biosynthesis. This is Elongation factor Tu 1 from Photorhabdus laumondii subsp. laumondii (strain DSM 15139 / CIP 105565 / TT01) (Photorhabdus luminescens subsp. laumondii).